Reading from the N-terminus, the 832-residue chain is Adhesin AWP2 (832 aa).

The signal sequence occupies residues 1–25 (MRKLPLFMAWKFWLICLYIIKVAST). 16 N-linked (GlcNAc...) asparagine glycosylation sites follow: Asn187, Asn290, Asn372, Asn390, Asn435, Asn448, Asn472, Asn482, Asn507, Asn512, Asn515, Asn534, Asn562, Asn579, Asn695, and Asn721. The disordered stretch occupies residues 722–747 (QTTSPSMHTTSLVGSENGVSAKTVND).

Its subcellular location is the secreted. The protein resides in the cell wall. In terms of biological role, mediates cell-substrate adhesion and promotes biofilm formation. The chain is Adhesin AWP2 from Candida glabrata (strain ATCC 2001 / BCRC 20586 / JCM 3761 / NBRC 0622 / NRRL Y-65 / CBS 138) (Yeast).